The primary structure comprises 368 residues: snRNA-activating protein complex subunit 1 (368 aa).

Positions 1–168 (MGTPPGLQTD…EEFKDPSDRV (168 aa)) are SNAPC3-binding. Residues 164–268 (PSDRVMKLIT…AESLAKIKSK (105 aa)) are SNAPC4-binding. Disordered stretches follow at residues 224-257 (QQWHKDRKNPSLKSKTNDGEEKMEGNSQETERCE) and 275-368 (QASK…RRKH). Over residues 238-257 (KTNDGEEKMEGNSQETERCE) the composition is skewed to basic and acidic residues. Residues Ser289 and Ser290 each carry the phosphoserine modification.

Part of the SNAPc complex composed of 5 subunits: SNAPC1, SNAPC2, SNAPC3, SNAPC4 and SNAPC5. SNAPC1 interacts with SNAPC3, SNAPC4 and TBP.

The protein localises to the nucleus. Its function is as follows. Part of the SNAPc complex required for the transcription of both RNA polymerase II and III small-nuclear RNA genes. Binds to the proximal sequence element (PSE), a non-TATA-box basal promoter element common to these 2 types of genes. Recruits TBP and BRF2 to the U6 snRNA TATA box. In Homo sapiens (Human), this protein is snRNA-activating protein complex subunit 1 (SNAPC1).